The following is a 64-amino-acid chain: Large ribosomal subunit protein bL33 (64 aa).

Positions 16-25 (EARTSSEPRR) are enriched in basic and acidic residues. The tract at residues 16–41 (EARTSSEPRRSNGVSRYTTEKNKRNT) is disordered.

The protein belongs to the bacterial ribosomal protein bL33 family.

This chain is Large ribosomal subunit protein bL33, found in Prochlorococcus marinus subsp. pastoris (strain CCMP1986 / NIES-2087 / MED4).